The following is a 250-amino-acid chain: MNETEKSTHFGYQTVPTDQKTDKVKHVFESVAAKYDLMNDLMSLGIHRWWKDFAITQCRLRTGQRILDLAGGTGDLAKRISPLVGDEGEVVIADINAAMLNVGRRRLLDQGIFRNIQFIQADAEKLPFPNNFFDRIVIGFGLRNVTNQLAALQSMHRVIKPGGFVVILEFSKPTLAPLKAVYDAYSFQLLPRLGKLVAKDEESYRYLVESIRMHPDQEALLSKMTDARFEDCDYHNLSGGIVAVHRGYKF.

Residues Thr73, Asp94, and 122 to 123 (DA) each bind S-adenosyl-L-methionine.

This sequence belongs to the class I-like SAM-binding methyltransferase superfamily. MenG/UbiE family.

It catalyses the reaction a 2-demethylmenaquinol + S-adenosyl-L-methionine = a menaquinol + S-adenosyl-L-homocysteine + H(+). The catalysed reaction is a 2-methoxy-6-(all-trans-polyprenyl)benzene-1,4-diol + S-adenosyl-L-methionine = a 5-methoxy-2-methyl-3-(all-trans-polyprenyl)benzene-1,4-diol + S-adenosyl-L-homocysteine + H(+). It participates in quinol/quinone metabolism; menaquinone biosynthesis; menaquinol from 1,4-dihydroxy-2-naphthoate: step 2/2. The protein operates within cofactor biosynthesis; ubiquinone biosynthesis. Its function is as follows. Methyltransferase required for the conversion of demethylmenaquinol (DMKH2) to menaquinol (MKH2) and the conversion of 2-polyprenyl-6-methoxy-1,4-benzoquinol (DDMQH2) to 2-polyprenyl-3-methyl-6-methoxy-1,4-benzoquinol (DMQH2). This chain is Ubiquinone/menaquinone biosynthesis C-methyltransferase UbiE, found in Coxiella burnetii (strain CbuK_Q154) (Coxiella burnetii (strain Q154)).